The following is a 290-amino-acid chain: PIH1 domain-containing protein 1 (290 aa).

Phosphoserine occurs at positions 12, 16, and 173.

Belongs to the PIH1 family. In terms of assembly, component of the R2TP complex composed at least of RUVBL1, RUVBL2, RPAP3 and PIHD1. Component of the PAQosome complex which is responsible for the biogenesis of several protein complexes and which consists of R2TP complex members RUVBL1, RUVBL2, RPAP3 and PIH1D1, URI complex members PFDN2, PFDN6, PDRG1, UXT and URI1 as well as ASDURF, POLR2E and DNAAF10/WDR92. Interacts with phosphorylated TELO2 and mediates interaction of TELO2 with the R2TP complex. Interacts with phosphorylated ECD, EFTUD2/SNRP116, RPB1 and UBR5 and with RPB1 in a phosphorylation-independent manner. Interacts with the core C/D box snoRNP particle components NOP58 and FBL and with RUVBL1/TIP49. Interacts with RPAP3 and DNAAF10. Interacts with histone H4 and with SWI/SNF complex member SMARCB1/SNF5. Interacts with the mTORC1 complex member RPTOR. Interacts with MSL1.

Its subcellular location is the nucleus. Its function is as follows. Involved in the assembly of C/D box small nucleolar ribonucleoprotein (snoRNP) particles. Recruits the SWI/SNF complex to the core promoter of rRNA genes and enhances pre-rRNA transcription. Mediates interaction of TELO2 with the R2TP complex which is necessary for the stability of MTOR and SMG1. Positively regulates the assembly and activity of the mTORC1 complex. This chain is PIH1 domain-containing protein 1 (Pih1d1), found in Rattus norvegicus (Rat).